The following is a 238-amino-acid chain: Uridylate kinase (238 aa).

12 to 15 (KLSG) is a binding site for ATP. The interval 20–25 (GEKGFG) is involved in allosteric activation by GTP. UMP is bound at residue glycine 54. The ATP site is built by glycine 55 and arginine 59. Residues aspartate 72 and 133 to 140 (TGNPYFST) contribute to the UMP site. Tyrosine 166 and aspartate 169 together coordinate ATP.

Belongs to the UMP kinase family. As to quaternary structure, homohexamer.

It is found in the cytoplasm. The enzyme catalyses UMP + ATP = UDP + ADP. The protein operates within pyrimidine metabolism; CTP biosynthesis via de novo pathway; UDP from UMP (UMPK route): step 1/1. With respect to regulation, allosterically activated by GTP. Inhibited by UTP. Functionally, catalyzes the reversible phosphorylation of UMP to UDP. This is Uridylate kinase from Clostridium botulinum (strain Langeland / NCTC 10281 / Type F).